Reading from the N-terminus, the 110-residue chain is Single-stranded DNA-binding protein 1 (110 aa).

In terms of domain architecture, SSB spans 1-104; sequence MNKILLIGRM…VVGEEVQFLE (104 aa).

Homotetramer.

This is Single-stranded DNA-binding protein 1 (ssb1) from Clostridium acetobutylicum (strain ATCC 824 / DSM 792 / JCM 1419 / IAM 19013 / LMG 5710 / NBRC 13948 / NRRL B-527 / VKM B-1787 / 2291 / W).